We begin with the raw amino-acid sequence, 190 residues long: Protein GrpE (190 aa).

The disordered stretch occupies residues 21–49 (DDLQEEVEATETEETVEEVIEETPEKSEL). A compositionally biased stretch (acidic residues) spans 23 to 42 (LQEEVEATETEETVEEVIEE).

The protein belongs to the GrpE family. In terms of assembly, homodimer.

It is found in the cytoplasm. Participates actively in the response to hyperosmotic and heat shock by preventing the aggregation of stress-denatured proteins, in association with DnaK and GrpE. It is the nucleotide exchange factor for DnaK and may function as a thermosensor. Unfolded proteins bind initially to DnaJ; upon interaction with the DnaJ-bound protein, DnaK hydrolyzes its bound ATP, resulting in the formation of a stable complex. GrpE releases ADP from DnaK; ATP binding to DnaK triggers the release of the substrate protein, thus completing the reaction cycle. Several rounds of ATP-dependent interactions between DnaJ, DnaK and GrpE are required for fully efficient folding. This is Protein GrpE from Streptococcus pyogenes serotype M3 (strain SSI-1).